The primary structure comprises 123 residues: Small ribosomal subunit protein uS13 (123 aa).

The interval 95 to 123 (GLPVRGQSSKTNARTRKGPRRSVMSRKKK) is disordered. Over residues 107–123 (ARTRKGPRRSVMSRKKK) the composition is skewed to basic residues.

This sequence belongs to the universal ribosomal protein uS13 family. In terms of assembly, part of the 30S ribosomal subunit. Forms a loose heterodimer with protein S19. Forms two bridges to the 50S subunit in the 70S ribosome.

In terms of biological role, located at the top of the head of the 30S subunit, it contacts several helices of the 16S rRNA. In the 70S ribosome it contacts the 23S rRNA (bridge B1a) and protein L5 of the 50S subunit (bridge B1b), connecting the 2 subunits; these bridges are implicated in subunit movement. Contacts the tRNAs in the A and P-sites. This is Small ribosomal subunit protein uS13 from Maridesulfovibrio salexigens (strain ATCC 14822 / DSM 2638 / NCIMB 8403 / VKM B-1763) (Desulfovibrio salexigens).